A 130-amino-acid chain; its full sequence is MNKEKNSYRDAIKDVELTMMAIDSHFRTHKGFTDSYLLVMILENEVGETRLEVSEGLTFDEVGYIVGSVSDNILHMHTYNYCEKNREDIYKWLKASRIEKFKSDYAKMLMNMHFGKENNVGSNINLKEEF.

The protein belongs to the phi29likevirus protein p56 family. In terms of assembly, homodimer. Interacts with host UDG; this interaction inhibits the uracil-DNA glycosylase.

Functionally, inhibits the host uracil-DNA glycosylase (UDG), an enzyme which removes uracil residues from DNA by the base excision repair. Interacts with host uracil-DNA glycosylase and prevents the latter from binding to DNA. Since the viral DNA polymerase efficiently incorporates dUMP into DNA, the virus needs to prevent the deleterious effect caused by host UDG when it eliminates uracil residues present in the viral genome. The protein is Protein p56 of Bacillus phage GA-1 (Bacteriophage GA-1).